A 243-amino-acid chain; its full sequence is UPF0758 protein MAE_44350 (243 aa).

One can recognise an MPN domain in the interval 113–235 (VIDSPDTAAA…FQSLRQITDL (123 aa)). Zn(2+) contacts are provided by histidine 184, histidine 186, and aspartate 197. The JAMM motif motif lies at 184–197 (HNHPTGSLVPSQDD).

It belongs to the UPF0758 family.

This chain is UPF0758 protein MAE_44350, found in Microcystis aeruginosa (strain NIES-843 / IAM M-2473).